A 421-amino-acid polypeptide reads, in one-letter code: UDP-N-acetylglucosamine 1-carboxyvinyltransferase (421 aa).

Residue 22–23 (KN) participates in phosphoenolpyruvate binding. R93 is a UDP-N-acetyl-alpha-D-glucosamine binding site. C117 acts as the Proton donor in catalysis. The residue at position 117 (C117) is a 2-(S-cysteinyl)pyruvic acid O-phosphothioketal. UDP-N-acetyl-alpha-D-glucosamine contacts are provided by residues 122–126 (RPVDL), D308, and L330.

This sequence belongs to the EPSP synthase family. MurA subfamily.

Its subcellular location is the cytoplasm. It catalyses the reaction phosphoenolpyruvate + UDP-N-acetyl-alpha-D-glucosamine = UDP-N-acetyl-3-O-(1-carboxyvinyl)-alpha-D-glucosamine + phosphate. It functions in the pathway cell wall biogenesis; peptidoglycan biosynthesis. In terms of biological role, cell wall formation. Adds enolpyruvyl to UDP-N-acetylglucosamine. The polypeptide is UDP-N-acetylglucosamine 1-carboxyvinyltransferase (Helicobacter hepaticus (strain ATCC 51449 / 3B1)).